The sequence spans 133 residues: Small ribosomal subunit protein uS8 (133 aa).

Belongs to the universal ribosomal protein uS8 family. As to quaternary structure, part of the 30S ribosomal subunit. Contacts proteins S5 and S12.

In terms of biological role, one of the primary rRNA binding proteins, it binds directly to 16S rRNA central domain where it helps coordinate assembly of the platform of the 30S subunit. This chain is Small ribosomal subunit protein uS8, found in Endomicrobium trichonymphae.